The following is a 455-amino-acid chain: GTPase Der (455 aa).

2 consecutive EngA-type G domains span residues 4 to 169 and 178 to 353; these read PIVA…PPKH and IQMA…EQHR. Residues 10-17, 57-61, 120-123, 184-191, 231-235, and 296-299 contribute to the GTP site; these read GRPNVGKS, DTGGL, NKCE, DTAGI, and NKWD. The KH-like domain maps to 354-439; it reads RRVSTSVVNE…PLKLFWRGKQ (86 aa).

Belongs to the TRAFAC class TrmE-Era-EngA-EngB-Septin-like GTPase superfamily. EngA (Der) GTPase family. As to quaternary structure, associates with the 50S ribosomal subunit.

Its function is as follows. GTPase that plays an essential role in the late steps of ribosome biogenesis. The chain is GTPase Der from Prochlorococcus marinus (strain MIT 9313).